The chain runs to 778 residues: Pentatricopeptide repeat-containing protein At3g09650, chloroplastic (778 aa).

The transit peptide at 1 to 65 (MNILRPPTSS…RSASGTANSS (65 aa)) directs the protein to the chloroplast. PPR repeat units lie at residues 235–269 (DTAA…DCEP), 270–304 (DVLT…GIKV), and 305–339 (CMTT…RRDL). Residues 351-381 (LKEKEEEEAEDDEDAFEDDEDSGYSARDEVS) are disordered. Over residues 355–372 (EEEEAEDDEDAFEDDEDS) the composition is skewed to acidic residues. PPR repeat units follow at residues 413–443 (DSRI…MRRQ), 451–485 (DEVT…GVPA), 486–521 (NRIT…GIEP), 522–556 (DVVS…GIAP), 557–587 (TKIS…MMND), 593–627 (DLIA…GFYP), and 628–658 (NVAT…IKER).

The protein belongs to the PPR family. P subfamily.

Its subcellular location is the plastid. The protein resides in the chloroplast stroma. Functionally, involved in the processing of polycistronic chloroplast psbB-psbT-psbH-petB-petD transcript. Could bind RNA. The protein is Pentatricopeptide repeat-containing protein At3g09650, chloroplastic (HCF152) of Arabidopsis thaliana (Mouse-ear cress).